The following is a 157-amino-acid chain: Tuberoinfundibular peptide of 39 residues (157 aa).

The signal sequence occupies residues 1–25 (MALSLPPRPALLFLVLMSVTLMASA). Residues 26 to 116 (FPQPQLRPLQ…DWPSRVGHQQ (91 aa)) constitute a propeptide that is removed on maturation.

It belongs to the parathyroid hormone family.

It is found in the secreted. Plays a role as a potent and selective agonist of pth2r resulting in adenyl cyclase activation and intracellular calcium level elevation. The chain is Tuberoinfundibular peptide of 39 residues from Danio rerio (Zebrafish).